The following is a 341-amino-acid chain: Syntaxin-122 (341 aa).

At M1 the chain carries N-acetylmethionine. Disordered stretches follow at residues 1–22 (MNDL…PPHS) and 111–137 (LDRA…RTSV). Topologically, residues 1-284 (MNDLLSGSFK…ARFYQKNTRK (284 aa)) are cytoplasmic. Composition is skewed to polar residues over residues 8 to 21 (SFKT…SPPH) and 126 to 137 (PGSSSDRQRTSV). A coiled-coil region spans residues 64–185 (CHNLRSSNEQ…GEYPDEATLE (122 aa)). The region spanning 213–275 (INEIQERHDA…RSGADRLVKA (63 aa)) is the t-SNARE coiled-coil homology domain. A helical; Anchor for type IV membrane protein membrane pass occupies residues 285-305 (WTCFAILLLLIIVVLIVVFTV). The Vesicular segment spans residues 306–341 (KPWESNGGGGGGAPRQATPVQAQPPPPPAVNRRLLR). Residues 312-341 (GGGGGGAPRQATPVQAQPPPPPAVNRRLLR) form a disordered region.

Belongs to the syntaxin family. As to quaternary structure, part of the t-SNARE complex.

It localises to the membrane. Its function is as follows. Vesicle trafficking protein that functions in the secretory pathway. This Arabidopsis thaliana (Mouse-ear cress) protein is Syntaxin-122 (SYP122).